A 313-amino-acid chain; its full sequence is Protoheme IX farnesyltransferase (313 aa).

A run of 8 helical transmembrane segments spans residues 32–52 (VMSLVVFTALVGMLLAPGDFH), 53–73 (PVLAVTAMLCIAVGGGAAGAL), 120–140 (VLVNWIAAALLAFTIFFYVVI), 153–173 (IVIGGAAGALPPVVAWAAVTG), 180–200 (LLLFAIIFFWTPPHFWALALF), 226–246 (ILLYTIVLVAVAAAPWPLGYF), 248–268 (AVYGIASLALGGWMLVLAIRV), and 284–304 (LFKFSILYLFALFSILLIEVV).

It belongs to the UbiA prenyltransferase family. Protoheme IX farnesyltransferase subfamily.

The protein resides in the cell inner membrane. It catalyses the reaction heme b + (2E,6E)-farnesyl diphosphate + H2O = Fe(II)-heme o + diphosphate. Its pathway is porphyrin-containing compound metabolism; heme O biosynthesis; heme O from protoheme: step 1/1. Its function is as follows. Converts heme B (protoheme IX) to heme O by substitution of the vinyl group on carbon 2 of heme B porphyrin ring with a hydroxyethyl farnesyl side group. The sequence is that of Protoheme IX farnesyltransferase from Rhodopseudomonas palustris (strain BisB5).